Here is a 280-residue protein sequence, read N- to C-terminus: Phosphatidylglycerol--prolipoprotein diacylglyceryl transferase (280 aa).

Helical transmembrane passes span 59–79 (FLTW…ILFY) and 97–117 (GGMS…LFTW). Arg-142 serves as a coordination point for a 1,2-diacyl-sn-glycero-3-phospho-(1'-sn-glycerol). Transmembrane regions (helical) follow at residues 207-227 (GFLA…CECF) and 233-253 (FIGF…PMAI).

It belongs to the Lgt family.

It is found in the cell inner membrane. The catalysed reaction is L-cysteinyl-[prolipoprotein] + a 1,2-diacyl-sn-glycero-3-phospho-(1'-sn-glycerol) = an S-1,2-diacyl-sn-glyceryl-L-cysteinyl-[prolipoprotein] + sn-glycerol 1-phosphate + H(+). It participates in protein modification; lipoprotein biosynthesis (diacylglyceryl transfer). Its function is as follows. Catalyzes the transfer of the diacylglyceryl group from phosphatidylglycerol to the sulfhydryl group of the N-terminal cysteine of a prolipoprotein, the first step in the formation of mature lipoproteins. The polypeptide is Phosphatidylglycerol--prolipoprotein diacylglyceryl transferase (Gluconacetobacter diazotrophicus (strain ATCC 49037 / DSM 5601 / CCUG 37298 / CIP 103539 / LMG 7603 / PAl5)).